The primary structure comprises 293 residues: Shikimate dehydrogenase (NADP(+)) (293 aa).

Shikimate is bound by residues 26 to 28 (SKS) and T73. The active-site Proton acceptor is K77. D89 contacts NADP(+). Residues N98 and D113 each contribute to the shikimate site. Residues 137–141 (GAGGA), 161–166 (NRTKQR), and I231 contribute to the NADP(+) site. Y233 is a shikimate binding site. G254 provides a ligand contact to NADP(+).

It belongs to the shikimate dehydrogenase family. Homodimer.

It catalyses the reaction shikimate + NADP(+) = 3-dehydroshikimate + NADPH + H(+). The protein operates within metabolic intermediate biosynthesis; chorismate biosynthesis; chorismate from D-erythrose 4-phosphate and phosphoenolpyruvate: step 4/7. Its function is as follows. Involved in the biosynthesis of the chorismate, which leads to the biosynthesis of aromatic amino acids. Catalyzes the reversible NADPH linked reduction of 3-dehydroshikimate (DHSA) to yield shikimate (SA). The chain is Shikimate dehydrogenase (NADP(+)) from Bartonella henselae (strain ATCC 49882 / DSM 28221 / CCUG 30454 / Houston 1) (Rochalimaea henselae).